Reading from the N-terminus, the 274-residue chain is Large ribosomal subunit protein uL2 (274 aa).

The segment at 200–274 (HALEKSGKAG…SKYIIERRKK (75 aa)) is disordered. Basic residues-rich tracts occupy residues 207-220 (KAGR…RPRN) and 255-274 (LKTR…RRKK).

Belongs to the universal ribosomal protein uL2 family. In terms of assembly, part of the 50S ribosomal subunit. Forms a bridge to the 30S subunit in the 70S ribosome.

Its function is as follows. One of the primary rRNA binding proteins. Required for association of the 30S and 50S subunits to form the 70S ribosome, for tRNA binding and peptide bond formation. It has been suggested to have peptidyltransferase activity; this is somewhat controversial. Makes several contacts with the 16S rRNA in the 70S ribosome. The sequence is that of Large ribosomal subunit protein uL2 from Parabacteroides distasonis (strain ATCC 8503 / DSM 20701 / CIP 104284 / JCM 5825 / NCTC 11152).